The following is a 593-amino-acid chain: UvrABC system protein C (593 aa).

One can recognise a GIY-YIG domain in the interval 14 to 91 (DSPGCYLHKD…IQENMPKYNI (78 aa)). The UVR domain maps to 196–231 (NKIVNGLTEKMKSAAMTMEFERAAEYRDLIEAISLL).

The protein belongs to the UvrC family. As to quaternary structure, interacts with UvrB in an incision complex.

It localises to the cytoplasm. Functionally, the UvrABC repair system catalyzes the recognition and processing of DNA lesions. UvrC both incises the 5' and 3' sides of the lesion. The N-terminal half is responsible for the 3' incision and the C-terminal half is responsible for the 5' incision. This Streptococcus agalactiae serotype III (strain NEM316) protein is UvrABC system protein C.